The primary structure comprises 85 residues: MDISRAEQRILHLLAQGGRIELVRDDTRKIEKITLYTRDGWIFGGLDLLTFRKLKQKRAIASSGGKPYRITTRGLELVRGELDNR.

It belongs to the UPF0386 family.

This is UPF0386 protein Atu1321 from Agrobacterium fabrum (strain C58 / ATCC 33970) (Agrobacterium tumefaciens (strain C58)).